A 135-amino-acid chain; its full sequence is MNISDVAKITGLTSKAIRFYEEKGLVTPPMRSENGYRTYTQQHLNELTLLRQARQVGFNLEESGELVNLFNDPQRHSADVKRRTLEKVAEIEQHIEELQSMRNQLLALANACPGDDSADCPIIENLSGCCHHRAG.

One can recognise an HTH merR-type domain in the interval 1–69 (MNISDVAKIT…LEESGELVNL (69 aa)). Residues 4–23 (SDVAKITGLTSKAIRFYEEK) constitute a DNA-binding region (H-T-H motif). 2 residues coordinate Cu(+): cysteine 112 and cysteine 120.

Homodimer.

It localises to the cytoplasm. In terms of biological role, regulates the transcription of the copA and cueO genes. It detects cytoplasmic copper stress and activates transcription in response to increasing copper concentrations. This chain is HTH-type transcriptional regulator CueR (cueR), found in Escherichia coli O6:H1 (strain CFT073 / ATCC 700928 / UPEC).